Consider the following 379-residue polypeptide: Succinyl-diaminopimelate desuccinylase (379 aa).

Position 70 (His-70) interacts with Zn(2+). The active site involves Asp-72. Asp-103 is a binding site for Zn(2+). Glu-137 (proton acceptor) is an active-site residue. Residues Glu-138, Glu-166, and His-352 each coordinate Zn(2+).

The protein belongs to the peptidase M20A family. DapE subfamily. Homodimer. It depends on Zn(2+) as a cofactor. Co(2+) serves as cofactor.

The catalysed reaction is N-succinyl-(2S,6S)-2,6-diaminopimelate + H2O = (2S,6S)-2,6-diaminopimelate + succinate. It functions in the pathway amino-acid biosynthesis; L-lysine biosynthesis via DAP pathway; LL-2,6-diaminopimelate from (S)-tetrahydrodipicolinate (succinylase route): step 3/3. Its function is as follows. Catalyzes the hydrolysis of N-succinyl-L,L-diaminopimelic acid (SDAP), forming succinate and LL-2,6-diaminopimelate (DAP), an intermediate involved in the bacterial biosynthesis of lysine and meso-diaminopimelic acid, an essential component of bacterial cell walls. The chain is Succinyl-diaminopimelate desuccinylase from Burkholderia cenocepacia (strain ATCC BAA-245 / DSM 16553 / LMG 16656 / NCTC 13227 / J2315 / CF5610) (Burkholderia cepacia (strain J2315)).